The chain runs to 124 residues: uncharacterized protein (124 aa).

This is an uncharacterized protein from Bacillus subtilis (strain 168).